Here is a 266-residue protein sequence, read N- to C-terminus: Vitamin B12-binding protein (266 aa).

An N-terminal signal peptide occupies residues methionine 1 to alanine 22. The Fe/B12 periplasmic-binding domain occupies arginine 25–aspartate 266. Residues tyrosine 50 and aspartate 242 to arginine 246 contribute to the cyanocob(III)alamin site. Cysteine 183 and cysteine 259 form a disulfide bridge.

This sequence belongs to the BtuF family. As to quaternary structure, the complex is composed of two ATP-binding proteins (BtuD), two transmembrane proteins (BtuC) and a solute-binding protein (BtuF).

Its subcellular location is the periplasm. In terms of biological role, part of the ABC transporter complex BtuCDF involved in vitamin B12 import. Binds vitamin B12 and delivers it to the periplasmic surface of BtuC. The protein is Vitamin B12-binding protein (btuF) of Escherichia coli (strain K12).